Consider the following 196-residue polypeptide: O-methyltransferase dpmpI (196 aa).

Residues 127–128, Asp152, and 174–175 each bind S-adenosyl-L-methionine; these read GG and SF. A disordered region spans residues 166 to 196; the sequence is NGIEAVPHSFEDPQPIKSKSPRLDNLARERL. Basic and acidic residues predominate over residues 186-196; that stretch reads PRLDNLARERL.

Belongs to the class I-like SAM-binding methyltransferase superfamily. Cation-independent O-methyltransferase family.

It participates in secondary metabolite biosynthesis; terpenoid biosynthesis. In terms of biological role, O-methyltransferase; part of the gene cluster that mediates the biosynthesis of diterpenoid pyrones. The first step of the pathway is the synthesis of the alpha-pyrone moiety by the polyketide synthase dpmpA via condensation of one acetyl-CoA starter unit with 3 malonyl-CoA units and 2 methylations. The alpha-pyrone is then combined with geranylgeranyl pyrophosphate (GGPP) formed by the GGPP synthase dpmpD through the action of the prenyltransferase dpmpC to yield a linear alpha-pyrone diterpenoid. Subsequent steps in the diterpenoid pyrone biosynthetic pathway involve the decalin core formation, which is initiated by the epoxidation of the C10-C11 olefin by the FAD-dependent oxidoreductase dpmpE, and is followed by a cyclization cascade catalyzed by the terpene cyclase dpmpB. The short chain dehydrogenase/reductase dpmpG then oxidizes the 8S hydroxy group to a ketone and the short chain dehydrogenase/reductase dpmpH reduces the ketone to the 8R hydroxy group to yield higginsianin B. Higginsianin B is further methylated by the methyltransferase dpmpI to produce the intermediate named FDDP B. The cytochrome P450 monooxygenase dpmpJ then oxidizes the C-26 methyl to primary alcohol, producing the final diterpenoid pyrone with a C-26 primary alcohol on the gamma-pyrone moiety named FDDP C. In Macrophomina phaseolina (strain MS6) (Charcoal rot fungus), this protein is O-methyltransferase dpmpI.